Reading from the N-terminus, the 956-residue chain is Isoleucine--tRNA ligase (956 aa).

The 'HIGH' region signature appears at 60 to 70 (PYANGHIHVGH). Residue glutamate 583 participates in L-isoleucyl-5'-AMP binding. A 'KMSKS' region motif is present at residues 624 to 628 (KMSKS). Lysine 627 provides a ligand contact to ATP. Positions 921, 924, 938, and 941 each coordinate Zn(2+).

It belongs to the class-I aminoacyl-tRNA synthetase family. IleS type 1 subfamily. Monomer. It depends on Zn(2+) as a cofactor.

It is found in the cytoplasm. The catalysed reaction is tRNA(Ile) + L-isoleucine + ATP = L-isoleucyl-tRNA(Ile) + AMP + diphosphate. Functionally, catalyzes the attachment of isoleucine to tRNA(Ile). As IleRS can inadvertently accommodate and process structurally similar amino acids such as valine, to avoid such errors it has two additional distinct tRNA(Ile)-dependent editing activities. One activity is designated as 'pretransfer' editing and involves the hydrolysis of activated Val-AMP. The other activity is designated 'posttransfer' editing and involves deacylation of mischarged Val-tRNA(Ile). In Aquifex aeolicus (strain VF5), this protein is Isoleucine--tRNA ligase.